Consider the following 960-residue polypeptide: Glycine dehydrogenase (decarboxylating) (960 aa).

Lys709 bears the N6-(pyridoxal phosphate)lysine mark.

Belongs to the GcvP family. The glycine cleavage system is composed of four proteins: P, T, L and H. Pyridoxal 5'-phosphate is required as a cofactor.

It catalyses the reaction N(6)-[(R)-lipoyl]-L-lysyl-[glycine-cleavage complex H protein] + glycine + H(+) = N(6)-[(R)-S(8)-aminomethyldihydrolipoyl]-L-lysyl-[glycine-cleavage complex H protein] + CO2. In terms of biological role, the glycine cleavage system catalyzes the degradation of glycine. The P protein binds the alpha-amino group of glycine through its pyridoxal phosphate cofactor; CO(2) is released and the remaining methylamine moiety is then transferred to the lipoamide cofactor of the H protein. The protein is Glycine dehydrogenase (decarboxylating) of Edwardsiella ictaluri (strain 93-146).